The chain runs to 291 residues: Exosome complex exonuclease RRP42 (291 aa).

Ala-2 is modified (N-acetylalanine). The residue at position 116 (Lys-116) is an N6-acetyllysine.

The protein belongs to the RNase PH family. Component of the RNA exosome core complex (Exo-9), composed of EXOSC1, EXOSC2, EXOSC3, EXOSC4, EXOSC5, EXOSC6, EXOSC7, EXOSC8 and EXOSC9; within the complex interacts with EXOSC2 and EXOSC4. The catalytically inactive RNA exosome core complex (Exo-9) associates with the catalytic subunit EXOSC10/RRP6. Exo-9 may associate with DIS3 to form the nucleolar exosome complex, or DIS3L to form the cytoplasmic exosome complex. Exo-9 is formed by a hexameric base ring consisting of the heterodimers EXOSC4-EXOSC9, EXOSC5-EXOSC8 and EXOSC6-EXOSC7, and a cap ring consisting of EXOSC1, EXOSC2 and EXOSC3. The RNA exosome complex associates with cofactors C1D/RRP47, MPHOSPH6/MPP6 and MTREX/MTR4. Interacts with ZC3HAV1. Interacts with DIS3; the interaction is direct.

The protein resides in the nucleus. It localises to the nucleolus. It is found in the cytoplasm. Non-catalytic component of the RNA exosome complex which has 3'-&gt;5' exoribonuclease activity and participates in a multitude of cellular RNA processing and degradation events. In the nucleus, the RNA exosome complex is involved in proper maturation of stable RNA species such as rRNA, snRNA and snoRNA, in the elimination of RNA processing by-products and non-coding 'pervasive' transcripts, such as antisense RNA species and promoter-upstream transcripts (PROMPTs), and of mRNAs with processing defects, thereby limiting or excluding their export to the cytoplasm. The RNA exosome may be involved in Ig class switch recombination (CSR) and/or Ig variable region somatic hypermutation (SHM) by targeting AICDA deamination activity to transcribed dsDNA substrates. In the cytoplasm, the RNA exosome complex is involved in general mRNA turnover and specifically degrades inherently unstable mRNAs containing AU-rich elements (AREs) within their 3' untranslated regions, and in RNA surveillance pathways, preventing translation of aberrant mRNAs. It seems to be involved in degradation of histone mRNA. The catalytic inactive RNA exosome core complex of 9 subunits (Exo-9) is proposed to play a pivotal role in the binding and presentation of RNA for ribonucleolysis, and to serve as a scaffold for the association with catalytic subunits and accessory proteins or complexes. This chain is Exosome complex exonuclease RRP42 (Exosc7), found in Mus musculus (Mouse).